A 397-amino-acid polypeptide reads, in one-letter code: MSNSYVLVINSGSSSLKFAVIDSQTGEALISGLGECFGMPEAVISWKYQGEKTEEAITAADHHHQHAINRIVGLMESLGFAQDLVAVGHRIVHGGEKFTSTVRIDEEVLAEIESLSDLAPLHNPAGAIGIQAAMAAFPSLPQFAVFDTAFHQTMPKKAFTGAISHELYKQYGIRRYGFHGTSHYYVSREAAKMLNKPIEQASFISVHLGNGASVCAISNGQSVDTSMGFTPLAGLMMGTRSGDLDPGIIEFLMKKGWSQEKVFETLNKKSGFLGVSGLTSDARGILEAMENGHEGAKLAFEVFTYRVAKYIGSYLIPLDHLDAIIFTGGIGENSLPIRREILGNLKLLGFVEDEKGNEAARFGKAGIIAKSELLNAVAMVIPTNEEFVIAQQSVELL.

Residue Asn10 participates in Mg(2+) binding. Lys17 contributes to the ATP binding site. Arg90 is a substrate binding site. Asp147 acts as the Proton donor/acceptor in catalysis. ATP contacts are provided by residues 207–211 (HLGNG), 281–283 (DAR), and 329–333 (GIGEN). Residue Glu385 participates in Mg(2+) binding.

It belongs to the acetokinase family. In terms of assembly, homodimer. Mg(2+) is required as a cofactor. Requires Mn(2+) as cofactor.

It localises to the cytoplasm. The catalysed reaction is acetate + ATP = acetyl phosphate + ADP. It participates in metabolic intermediate biosynthesis; acetyl-CoA biosynthesis; acetyl-CoA from acetate: step 1/2. Catalyzes the formation of acetyl phosphate from acetate and ATP. Can also catalyze the reverse reaction. This Vibrio cholerae serotype O1 (strain ATCC 39315 / El Tor Inaba N16961) protein is Acetate kinase 2.